Consider the following 145-residue polypeptide: ATP synthase epsilon chain (145 aa).

Belongs to the ATPase epsilon chain family. As to quaternary structure, F-type ATPases have 2 components, CF(1) - the catalytic core - and CF(0) - the membrane proton channel. CF(1) has five subunits: alpha(3), beta(3), gamma(1), delta(1), epsilon(1). CF(0) has three main subunits: a, b and c.

Its subcellular location is the cell inner membrane. Produces ATP from ADP in the presence of a proton gradient across the membrane. The sequence is that of ATP synthase epsilon chain from Francisella tularensis subsp. tularensis (strain FSC 198).